We begin with the raw amino-acid sequence, 553 residues long: Chaperonin GroEL 2 (553 aa).

ATP-binding positions include 29–32 (TLGP), 86–90 (DGTTT), Gly414, and Asp495.

This sequence belongs to the chaperonin (HSP60) family. Forms a cylinder of 14 subunits composed of two heptameric rings stacked back-to-back. Interacts with the co-chaperonin GroES.

It is found in the cytoplasm. It carries out the reaction ATP + H2O + a folded polypeptide = ADP + phosphate + an unfolded polypeptide.. Functionally, together with its co-chaperonin GroES, plays an essential role in assisting protein folding. The GroEL-GroES system forms a nano-cage that allows encapsulation of the non-native substrate proteins and provides a physical environment optimized to promote and accelerate protein folding. This Gloeobacter violaceus (strain ATCC 29082 / PCC 7421) protein is Chaperonin GroEL 2.